Here is a 101-residue protein sequence, read N- to C-terminus: NAD(P)H-quinone oxidoreductase subunit 4L, chloroplastic (101 aa).

Helical transmembrane passes span 2 to 22 (MLEYVLGLSAYLFSIGIYGLI), 32 to 52 (MCLELILNAVNINFVTFSDFF), and 61 to 81 (IFSIFVISIAAAEAAIGPAIV).

The protein belongs to the complex I subunit 4L family. As to quaternary structure, NDH is composed of at least 16 different subunits, 5 of which are encoded in the nucleus.

The protein localises to the plastid. Its subcellular location is the chloroplast thylakoid membrane. The enzyme catalyses a plastoquinone + NADH + (n+1) H(+)(in) = a plastoquinol + NAD(+) + n H(+)(out). It carries out the reaction a plastoquinone + NADPH + (n+1) H(+)(in) = a plastoquinol + NADP(+) + n H(+)(out). Functionally, NDH shuttles electrons from NAD(P)H:plastoquinone, via FMN and iron-sulfur (Fe-S) centers, to quinones in the photosynthetic chain and possibly in a chloroplast respiratory chain. The immediate electron acceptor for the enzyme in this species is believed to be plastoquinone. Couples the redox reaction to proton translocation, and thus conserves the redox energy in a proton gradient. This Populus trichocarpa (Western balsam poplar) protein is NAD(P)H-quinone oxidoreductase subunit 4L, chloroplastic.